The following is a 649-amino-acid chain: Nitrosuccinic acid synthase npaA (649 aa).

It belongs to the nitrosuccinic acid synthase family. Requires FAD as cofactor.

It catalyses the reaction L-aspartate + 3 NADPH + 3 O2 + 2 H(+) = 2-nitrobutanedioate + 3 NADP(+) + 4 H2O. It participates in mycotoxin biosynthesis. Nitrosuccinic acid synthase; part of the gene cluster that mediates the biosynthesis of the deadly neurotoxic nitroalkane 3-nitropropanoic acid (3-NPA) that acts as an antimetabolite of succinate and irreversibly inhibits succinate dehydrogenase and disrupts mitochondrial oxidative phosphorylation. NpaA catalyzes the iterative oxidation of L-aspartic acid to nitrosuccinic acid (2-nitrobutanedioate). Alternative amino acid substrates such as L-glutamate and D-aspartate are not accepted by npaA as a substrate, showing the strict substrate specificity toward L-aspartate. The nitrosuccinic acid decarboxylase npaB then facilitates decarboxylation of Nitrosuccinic acid to produce 3-NPA. The polypeptide is Nitrosuccinic acid synthase npaA (Aspergillus oryzae (strain ATCC 42149 / RIB 40) (Yellow koji mold)).